Reading from the N-terminus, the 45-residue chain is Gene 78 protein (45 aa).

Over residues Met-1–Leu-14 the composition is skewed to basic and acidic residues. Positions Met-1–Tyr-45 are disordered. The span at His-23–Lys-35 shows a compositional bias: basic residues.

The polypeptide is Gene 78 protein (78) (Mycobacterium phage L5 (Mycobacteriophage L5)).